The following is a 670-amino-acid chain: Cyclic AMP-dependent transcription factor ATF-6 alpha (670 aa).

The transcription activation stretch occupies residues 1-150; that stretch reads MGEPAGVAGT…SLSSAEPLKE (150 aa). Residues 1 to 377 are Cytoplasmic-facing; that stretch reads MGEPAGVAGT…RLKVPSPKRR (377 aa). A Glycyl lysine isopeptide (Lys-Gly) (interchain with G-Cter in SUMO2) cross-link involves residue Lys-87. Residues 91–183 form a disordered region; sequence QPLSPASSSY…NSKPSIQPKP (93 aa). 2 stretches are compositionally biased toward low complexity: residues 94–113 and 123–134; these read SPAS…SYSS and LSSSSQMSPLSL. Lys-152 participates in a covalent cross-link: Glycyl lysine isopeptide (Lys-Gly) (interchain with G-Cter in ubiquitin). The bZIP domain maps to 306–369; that stretch reads VLRRQQRMIK…DEVVSENQRL (64 aa). The segment at 308-339 is basic motif; the sequence is RRQQRMIKNRESACQSRKKKKEYMLGLEARLK. The leucine-zipper stretch occupies residues 348–355; sequence LKKENGTL. A helical; Signal-anchor for type II membrane protein membrane pass occupies residues 378 to 398; sequence VVCVMIVLAFIILNYGPMSML. Residues 399–670 lie on the Lumenal side of the membrane; it reads EQDSRRMNPS…VVSTIPESLQ (272 aa). The interval 468-589 is interaction with THBS4; it reads QPLINTTESL…ATTHNKTTRP (122 aa). Asn-472, Asn-584, and Asn-643 each carry an N-linked (GlcNAc...) asparagine glycan.

The protein belongs to the bZIP family. ATF subfamily. Interacts with XBP1 isoform 2; the interaction occurs in a ER stress-dependent manner. Interacts with LACC1. As to quaternary structure, interacts with THBS4 (via EGF-like 3; calcium-binding domain) which facilitates its processing, activation and nuclear translocation. Interacts (via lumenal domain) with THBS1. In terms of assembly, homodimer and heterodimer with ATF6-beta. The dimer interacts with the nuclear transcription factor Y (NF-Y) trimer through direct binding to NF-Y subunit C (NF-YC). Also interacts with the transcription factors GTF2I, YY1 and SRF. In terms of processing, during unfolded protein response, a fragment of approximately 50 kDa containing the cytoplasmic transcription factor domain is released by proteolysis. The cleavage seems to be performed sequentially by site-1 (MBTPS1, S1P) and site-2 (MBTPS2, S2P) proteases. Post-translationally, N-glycosylated; in its luminal domain. The glycosylation status may serve as a sensor for ER homeostasis, resulting in ATF6 activation to trigger the unfolded protein response (UPR). Ubiquitinated by RNF186 at Lys-152, which is required for pattern recognition receptor-induced unfolded protein response-associated outcomes. As to expression, ubiquitous.

The protein resides in the endoplasmic reticulum membrane. Its subcellular location is the golgi apparatus membrane. It localises to the nucleus. Precursor of the transcription factor form (Processed cyclic AMP-dependent transcription factor ATF-6 alpha), which is embedded in the endoplasmic reticulum membrane. Endoplasmic reticulum stress promotes processing of this form, releasing the transcription factor form that translocates into the nucleus, where it activates transcription of genes involved in the unfolded protein response (UPR). Functionally, transcription factor that initiates the unfolded protein response (UPR) during endoplasmic reticulum stress by activating transcription of genes involved in the UPR. Binds DNA on the 5'-CCAC[GA]-3'half of the ER stress response element (ERSE) (5'-CCAAT-N(9)-CCAC[GA]-3') and of ERSE II (5'-ATTGG-N-CCACG-3'). Binding to ERSE requires binding of NF-Y to ERSE. Could also be involved in activation of transcription by the serum response factor. May play a role in foveal development and cone function in the retina. This is Cyclic AMP-dependent transcription factor ATF-6 alpha (ATF6) from Homo sapiens (Human).